Consider the following 95-residue polypeptide: Aspartyl/glutamyl-tRNA(Asn/Gln) amidotransferase subunit C (95 aa).

The interval 51–95 is disordered; that stretch reads PTSHATLTSSRLREDVTRPSLPPEKSLANAPAKSDTSFAVPKIIE.

The protein belongs to the GatC family. In terms of assembly, heterotrimer of A, B and C subunits.

It catalyses the reaction L-glutamyl-tRNA(Gln) + L-glutamine + ATP + H2O = L-glutaminyl-tRNA(Gln) + L-glutamate + ADP + phosphate + H(+). The enzyme catalyses L-aspartyl-tRNA(Asn) + L-glutamine + ATP + H2O = L-asparaginyl-tRNA(Asn) + L-glutamate + ADP + phosphate + 2 H(+). Functionally, allows the formation of correctly charged Asn-tRNA(Asn) or Gln-tRNA(Gln) through the transamidation of misacylated Asp-tRNA(Asn) or Glu-tRNA(Gln) in organisms which lack either or both of asparaginyl-tRNA or glutaminyl-tRNA synthetases. The reaction takes place in the presence of glutamine and ATP through an activated phospho-Asp-tRNA(Asn) or phospho-Glu-tRNA(Gln). The chain is Aspartyl/glutamyl-tRNA(Asn/Gln) amidotransferase subunit C from Myxococcus xanthus (strain DK1622).